The primary structure comprises 334 residues: Ferredoxin--NADP reductase (334 aa).

FAD-binding residues include D33, Q41, Y46, A86, F120, D286, and T327.

Belongs to the ferredoxin--NADP reductase type 2 family. As to quaternary structure, homodimer. FAD serves as cofactor.

The enzyme catalyses 2 reduced [2Fe-2S]-[ferredoxin] + NADP(+) + H(+) = 2 oxidized [2Fe-2S]-[ferredoxin] + NADPH. The protein is Ferredoxin--NADP reductase of Rickettsia typhi (strain ATCC VR-144 / Wilmington).